The sequence spans 383 residues: L-lactate dehydrogenase (383 aa).

The region spanning 1–380 (MIISSTFDYR…THESLASTDA (380 aa)) is the FMN hydroxy acid dehydrogenase domain. Tyrosine 24 is a substrate binding site. Positions 106 and 127 each coordinate FMN. Residue tyrosine 129 participates in substrate binding. Threonine 155 serves as a coordination point for FMN. A substrate-binding site is contributed by arginine 164. Lysine 251 serves as a coordination point for FMN. Histidine 275 serves as the catalytic Proton acceptor. Arginine 278 is a binding site for substrate. 306 to 330 (DSGVRSGLDVVRMIAQGADAVMIGR) contributes to the FMN binding site.

This sequence belongs to the FMN-dependent alpha-hydroxy acid dehydrogenase family. It depends on FMN as a cofactor.

Its subcellular location is the cell inner membrane. It carries out the reaction (S)-lactate + A = pyruvate + AH2. Its function is as follows. Catalyzes the conversion of L-lactate to pyruvate. Is coupled to the respiratory chain. The chain is L-lactate dehydrogenase from Bartonella quintana (strain Toulouse) (Rochalimaea quintana).